The primary structure comprises 1241 residues: Interphotoreceptor matrix proteoglycan 2 (1241 aa).

The first 22 residues, 1–22, serve as a signal peptide directing secretion; that stretch reads MIMFPLFGKISLGILIFVLIEG. The Extracellular portion of the chain corresponds to 23-1099; that stretch reads DFPSLTAQTY…KHCEEFVSEP (1077 aa). N-linked (GlcNAc...) asparagine glycosylation occurs at Asn154. The segment at 180–223 is disordered; sequence ELSSPVPVGDTSTLGDTTLSVPHPEVDAYEGASESSLERPEESI. Residues 189–199 are compositionally biased toward polar residues; that stretch reads DTSTLGDTTLS. Residues Thr190 and Thr192 are each glycosylated (O-linked (GalNAc...) threonine). The 115-residue stretch at 239–353 folds into the SEA 1 domain; sequence GEQIAEFSIH…KPTVVYTISN (115 aa). Residues 259-267 form a hyaluronan-binding motif involved in chondroitin sulfate A-binding region; the sequence is QDSSSFHHQ. Asn301, Asn320, and Asn370 each carry an N-linked (GlcNAc...) asparagine glycan. O-linked (GalNAc...) threonine glycans are attached at residues Thr544 and Thr556. Basic and acidic residues predominate over residues 660–678; the sequence is QISKHSKYEHDDRSTHFPE. The segment at 660–684 is disordered; that stretch reads QISKHSKYEHDDRSTHFPEEEPLSG. Positions 897-1010 constitute an SEA 2 domain; the sequence is GALVVFFSLR…YSLDVESGDE (114 aa). Asn942 and Asn956 each carry an N-linked (GlcNAc...) asparagine glycan. 2 consecutive EGF-like domains span residues 1010-1051 and 1052-1093; these read EANP…RPCQ and SLCD…KHCE. 6 disulfide bridges follow: Cys1014–Cys1025, Cys1019–Cys1036, Cys1038–Cys1050, Cys1054–Cys1067, Cys1061–Cys1077, and Cys1079–Cys1092. Residues 1080–1088 are hyaluronan-binding motif involved in chondroitin sulfate C-binding; it reads RVGENWWYR. The chain crosses the membrane as a helical span at residues 1100 to 1120; that stretch reads VIIGITIASVVGLLVIFSAII. Over 1121-1241 the chain is Cytoplasmic; the sequence is YFFIRTLQAH…FVREQQVEEV (121 aa). The segment at 1125 to 1133 is hyaluronan-binding motif involved in chondroitin sulfate A- and C-binding; that stretch reads RTLQAHHDR. The segment at 1136–1145 is hyaluronan-binding motif involved in chondroitin sulfate C-binding; it reads RESPFSGSSR. A hyaluronan-binding motif involved in chondroitin sulfate A- and C-binding motif region spans residues 1210–1218; the sequence is REEIQERMR.

Highly glycosylated (N- and O-linked carbohydrates). Expressed in the retina (at protein level). Expressed by photoreceptors of the interphotoreceptor matrix (IPM) surrounding both rods and cones (at protein level). IPM occupies the subretinal space between the apices of the retinal pigment epithelium and the neural retina. Expressed in the pineal gland (at protein level).

It is found in the photoreceptor outer segment membrane. The protein localises to the photoreceptor inner segment membrane. Its subcellular location is the secreted. It localises to the extracellular space. The protein resides in the extracellular matrix. It is found in the interphotoreceptor matrix. Functionally, chondroitin sulfate- and hyaluronan-binding proteoglycan involved in the organization of interphotoreceptor matrix; may participate in the maturation and maintenance of the light-sensitive photoreceptor outer segment. Binds heparin. The chain is Interphotoreceptor matrix proteoglycan 2 (IMPG2) from Homo sapiens (Human).